We begin with the raw amino-acid sequence, 87 residues long: Small ribosomal subunit protein bS20 (87 aa).

The disordered stretch occupies residues 67 to 87; sequence HKNNGSRKASRLDAYVQSKQQ.

It belongs to the bacterial ribosomal protein bS20 family.

Functionally, binds directly to 16S ribosomal RNA. This Metamycoplasma arthritidis (strain 158L3-1) (Mycoplasma arthritidis) protein is Small ribosomal subunit protein bS20.